The following is a 186-amino-acid chain: MTWIGLLIVGLTAIAVQGEVPIVTRAEWNAKPPNGAIDSMETPLPRAVIAHTAGGACADDVTCSQHMRNLQNFQMSKQKFSDIGYHYLIGGNGKVYEGRSPSQRGAFAGPNNDGSLGIAFIGNFEKQAPNKEALDAAKELLEQAVKQAQLVEGYKLLGHRQVSATMSPGEALYALIQQWPNWSEEM.

The N-terminal stretch at 1 to 18 (MTWIGLLIVGLTAIAVQG) is a signal peptide. In terms of domain architecture, N-acetylmuramoyl-L-alanine amidase spans 47–169 (AVIAHTAGGA…RQVSATMSPG (123 aa)). Cys-57 and Cys-63 are oxidised to a cystine. Residue Asn-181 is glycosylated (N-linked (GlcNAc...) asparagine).

Belongs to the N-acetylmuramoyl-L-alanine amidase 2 family.

The protein resides in the secreted. Peptidoglycan-recognition protein that plays a key role in innate immunity by binding to peptidoglycans (PGN) of Gram-positive bacteria and activating the Toll pathway. Has no activity against on Gram-negative bacteria and fungi. Shows some partial redundancy with PRPGP-SA in Gram-positive bacteria recognition. May act by activating the proteolytic cleavage of Spatzle and the subsequent activation of Toll pathway. Recognizes S.aureus PGN. The polypeptide is Peptidoglycan-recognition protein SD (PGRP-SD) (Drosophila simulans (Fruit fly)).